The chain runs to 98 residues: NADH-ubiquinone oxidoreductase chain 4L (98 aa).

3 helical membrane passes run 2-22 (PSIF…MLIF), 37-57 (MLSM…TMSF), and 61-81 (ILLL…LVTV).

This sequence belongs to the complex I subunit 4L family. Core subunit of respiratory chain NADH dehydrogenase (Complex I) which is composed of 45 different subunits.

Its subcellular location is the mitochondrion inner membrane. It carries out the reaction a ubiquinone + NADH + 5 H(+)(in) = a ubiquinol + NAD(+) + 4 H(+)(out). Its function is as follows. Core subunit of the mitochondrial membrane respiratory chain NADH dehydrogenase (Complex I) which catalyzes electron transfer from NADH through the respiratory chain, using ubiquinone as an electron acceptor. Part of the enzyme membrane arm which is embedded in the lipid bilayer and involved in proton translocation. The polypeptide is NADH-ubiquinone oxidoreductase chain 4L (MT-ND4L) (Varecia rubra (Red ruffed lemur)).